A 103-amino-acid chain; its full sequence is Large ribosomal subunit protein uL24 (103 aa).

Belongs to the universal ribosomal protein uL24 family. As to quaternary structure, part of the 50S ribosomal subunit.

Functionally, one of two assembly initiator proteins, it binds directly to the 5'-end of the 23S rRNA, where it nucleates assembly of the 50S subunit. One of the proteins that surrounds the polypeptide exit tunnel on the outside of the subunit. The protein is Large ribosomal subunit protein uL24 of Ruegeria pomeroyi (strain ATCC 700808 / DSM 15171 / DSS-3) (Silicibacter pomeroyi).